Reading from the N-terminus, the 396-residue chain is Elongation factor Tu (396 aa).

Positions 10–206 (KPHVNVGTIG…ALDSYIPDPE (197 aa)) constitute a tr-type G domain. The interval 19–26 (GHVDHGKT) is G1. 19 to 26 (GHVDHGKT) is a GTP binding site. A Mg(2+)-binding site is contributed by threonine 26. Residues 60-64 (GITIN) form a G2 region. The interval 81 to 84 (DCPG) is G3. Residues 81–85 (DCPGH) and 136–139 (NKCD) contribute to the GTP site. The segment at 136 to 139 (NKCD) is G4. The interval 174–176 (SAL) is G5.

The protein belongs to the TRAFAC class translation factor GTPase superfamily. Classic translation factor GTPase family. EF-Tu/EF-1A subfamily. As to quaternary structure, monomer.

The protein resides in the cytoplasm. It catalyses the reaction GTP + H2O = GDP + phosphate + H(+). Functionally, GTP hydrolase that promotes the GTP-dependent binding of aminoacyl-tRNA to the A-site of ribosomes during protein biosynthesis. The chain is Elongation factor Tu from Dechloromonas aromatica (strain RCB).